The chain runs to 341 residues: Phosphoribosylformylglycinamidine cyclo-ligase (341 aa).

This sequence belongs to the AIR synthase family.

It localises to the cytoplasm. The catalysed reaction is 2-formamido-N(1)-(5-O-phospho-beta-D-ribosyl)acetamidine + ATP = 5-amino-1-(5-phospho-beta-D-ribosyl)imidazole + ADP + phosphate + H(+). It functions in the pathway purine metabolism; IMP biosynthesis via de novo pathway; 5-amino-1-(5-phospho-D-ribosyl)imidazole from N(2)-formyl-N(1)-(5-phospho-D-ribosyl)glycinamide: step 2/2. This Xanthomonas campestris pv. campestris (strain B100) protein is Phosphoribosylformylglycinamidine cyclo-ligase.